A 131-amino-acid polypeptide reads, in one-letter code: Cystatin J (131 aa).

The N-terminal stretch at 1–18 is a signal peptide; sequence MHLYLCVLVCLSIGMANC. The Cystatin domain occupies 35 to 109; the sequence is DEILLTGVEF…RMNLPTKCSF (75 aa). The Secondary area of contact signature appears at 68 to 72; it reads QVVAG. 2 disulfide bridges follow: Cys86-Cys97 and Cys107-Cys128.

The protein belongs to the cystatin family.

Its subcellular location is the secreted. It is found in the nematocyst. Functionally, this recombinant protein inhibits the C1 cysteine protease papain (Ki is below 0.5 nM). The protein is Cystatin J of Cyanea capillata (Lion's mane jellyfish).